The following is a 283-amino-acid chain: GTPase Era (283 aa).

Residues 7-175 form the Era-type G domain; it reads YCGHVIIVGK…KNIIKSYLPE (169 aa). The G1 stretch occupies residues 15–22; that stretch reads GKANVGKS. 15-22 provides a ligand contact to GTP; the sequence is GKANVGKS. The G2 stretch occupies residues 41 to 45; the sequence is NTTQS. A G3 region spans residues 62 to 65; sequence DTPG. Residues 62–66 and 124–127 contribute to the GTP site; these read DTPGV and NKID. The interval 124–127 is G4; it reads NKID. The interval 154-156 is G5; that stretch reads ISA. The KH type-2 domain occupies 198-283; that stretch reads IREQLILFLG…HLVLWVKDKN (86 aa).

The protein belongs to the TRAFAC class TrmE-Era-EngA-EngB-Septin-like GTPase superfamily. Era GTPase family. Monomer.

It localises to the cytoplasm. The protein resides in the cell membrane. In terms of biological role, an essential GTPase that binds both GDP and GTP, with rapid nucleotide exchange. Plays a role in 16S rRNA processing and 30S ribosomal subunit biogenesis and possibly also in cell cycle regulation and energy metabolism. The polypeptide is GTPase Era (Buchnera aphidicola subsp. Acyrthosiphon pisum (strain Tuc7)).